A 436-amino-acid polypeptide reads, in one-letter code: S-locus-specific glycoprotein S6 (436 aa).

The signal sequence occupies residues methionine 1–serine 31. Residues threonine 34–tryptophan 156 form the Bulb-type lectin domain. 7 N-linked (GlcNAc...) asparagine glycosylation sites follow: asparagine 46, asparagine 64, asparagine 114, asparagine 121, asparagine 245, asparagine 261, and asparagine 390. A PAN domain is found at cysteine 351 to alanine 431. Intrachain disulfides connect cysteine 381–cysteine 406 and cysteine 389–cysteine 391.

As to expression, stigma.

Functionally, involved in sporophytic self-incompatibility system (the inability of flowering plants to achieve self-fertilization). The sequence is that of S-locus-specific glycoprotein S6 (SLSG) from Brassica oleracea (Wild cabbage).